A 207-amino-acid polypeptide reads, in one-letter code: Guanylate kinase (207 aa).

A Guanylate kinase-like domain is found at 6-185; it reads GLLIVLSGPS…AKNRIQSIVE (180 aa). 13-20 is an ATP binding site; it reads GPSGVGKG.

It belongs to the guanylate kinase family.

The protein localises to the cytoplasm. The catalysed reaction is GMP + ATP = GDP + ADP. Essential for recycling GMP and indirectly, cGMP. The chain is Guanylate kinase from Staphylococcus epidermidis (strain ATCC 12228 / FDA PCI 1200).